Here is a 263-residue protein sequence, read N- to C-terminus: Glutamate racemase (263 aa).

Residues 12 to 13 (DS) and 44 to 45 (YG) each bind substrate. The Proton donor/acceptor role is filled by C75. 76 to 77 (NT) contributes to the substrate binding site. The active-site Proton donor/acceptor is C186. Residue 187–188 (TH) participates in substrate binding.

The protein belongs to the aspartate/glutamate racemases family.

The enzyme catalyses L-glutamate = D-glutamate. It functions in the pathway cell wall biogenesis; peptidoglycan biosynthesis. Provides the (R)-glutamate required for cell wall biosynthesis. In Ectopseudomonas mendocina (strain ymp) (Pseudomonas mendocina), this protein is Glutamate racemase.